Consider the following 70-residue polypeptide: Small ribosomal subunit protein bS21 (70 aa).

This sequence belongs to the bacterial ribosomal protein bS21 family.

This chain is Small ribosomal subunit protein bS21, found in Nautilia profundicola (strain ATCC BAA-1463 / DSM 18972 / AmH).